A 359-amino-acid chain; its full sequence is uncharacterized protein (359 aa).

Belongs to the glycosyltransferase group 1 family. Glycosyltransferase 4 subfamily.

This is an uncharacterized protein from Bacillus subtilis (strain 168).